The chain runs to 148 residues: 3-dehydroquinate dehydratase (148 aa).

Tyr23 functions as the Proton acceptor in the catalytic mechanism. Substrate contacts are provided by Asn75, His81, and Asp88. His101 functions as the Proton donor in the catalytic mechanism. Residues 102–103 (LS) and Arg112 each bind substrate.

Belongs to the type-II 3-dehydroquinase family. Homododecamer.

The enzyme catalyses 3-dehydroquinate = 3-dehydroshikimate + H2O. It participates in metabolic intermediate biosynthesis; chorismate biosynthesis; chorismate from D-erythrose 4-phosphate and phosphoenolpyruvate: step 3/7. Its function is as follows. Catalyzes a trans-dehydration via an enolate intermediate. This chain is 3-dehydroquinate dehydratase, found in Xanthomonas axonopodis pv. citri (strain 306).